Consider the following 211-residue polypeptide: MIVLALDVYEREKALSIAEDVKDYISMIKVNWPLIIGSGLGVISELKKKTGLPIIADLKLADIPNTNRLIAKKVYDAGADYIILHSFVGRDSVKAVKELGEIIMIVEMSHPGALEFINPLTDKFIDMANEIKPFGVIAPGTRPERIRYIRERLSKDIKVLTPGIGAQGGSPVEALKAGADYIIIGRAIYNAERPREAAKKIFEEVKEWSSR.

Residues D7, K29, 57-66, S109, 162-172, G185, and R186 each bind substrate; these read DLKLADIPNT and PGIGAQGGSPV. K59 functions as the Proton donor in the catalytic mechanism.

It belongs to the OMP decarboxylase family. Type 1 subfamily. Homodimer.

The catalysed reaction is orotidine 5'-phosphate + H(+) = UMP + CO2. The protein operates within pyrimidine metabolism; UMP biosynthesis via de novo pathway; UMP from orotate: step 2/2. Catalyzes the decarboxylation of orotidine 5'-monophosphate (OMP) to uridine 5'-monophosphate (UMP). The chain is Orotidine 5'-phosphate decarboxylase from Pyrococcus furiosus (strain ATCC 43587 / DSM 3638 / JCM 8422 / Vc1).